Reading from the N-terminus, the 212-residue chain is MASLLLFVLVIQIITYLINTIGARTIDSLLWLLYIKLPNQASQVAREQRHAKLEVIRLKREMSATSSQDEFAKWAKLRRRHDKAMEEYDVKNKKLSALKTSFDWTIKTVRWVSTTGVTVILQFWFSKSPIFDLPRGWLPWQVEWILSFPRAPLGTVSIQVWGGACGTVIALVGGAMGVAAPAFKKINQPRGEAQKMGTPRGSREQTPVRKTQ.

Residues 1 to 4 are Lumenal-facing; the sequence is MASL. Residues 5 to 24 form a helical membrane-spanning segment; sequence LLFVLVIQIITYLINTIGAR. At 25–110 the chain is on the cytoplasmic side; it reads TIDSLLWLLY…SFDWTIKTVR (86 aa). Residues 75–99 are a coiled coil; it reads AKLRRRHDKAMEEYDVKNKKLSALK. The helical transmembrane segment at 111-131 threads the bilayer; the sequence is WVSTTGVTVILQFWFSKSPIF. Residues 132-155 lie on the Lumenal side of the membrane; it reads DLPRGWLPWQVEWILSFPRAPLGT. A helical transmembrane segment spans residues 156–172; the sequence is VSIQVWGGACGTVIALV. Residues 173 to 212 are Cytoplasmic-facing; that stretch reads GGAMGVAAPAFKKINQPRGEAQKMGTPRGSREQTPVRKTQ. The tract at residues 189 to 212 is disordered; that stretch reads PRGEAQKMGTPRGSREQTPVRKTQ. A compositionally biased stretch (basic and acidic residues) spans 201-212; that stretch reads GSREQTPVRKTQ.

This sequence belongs to the WRB/GET1 family. In terms of assembly, interacts with GET3.

It is found in the endoplasmic reticulum membrane. In terms of biological role, required for the post-translational delivery of tail-anchored (TA) proteins to the endoplasmic reticulum. Acts as a membrane receptor for soluble GET3, which recognizes and selectively binds the transmembrane domain of TA proteins in the cytosol. In Arthroderma otae (strain ATCC MYA-4605 / CBS 113480) (Microsporum canis), this protein is Protein GET1.